The primary structure comprises 129 residues: Putative pre-16S rRNA nuclease (129 aa).

The protein belongs to the YqgF nuclease family.

Its subcellular location is the cytoplasm. Could be a nuclease involved in processing of the 5'-end of pre-16S rRNA. The protein is Putative pre-16S rRNA nuclease of Campylobacter jejuni subsp. doylei (strain ATCC BAA-1458 / RM4099 / 269.97).